A 359-amino-acid chain; its full sequence is MLSAASRVVSRAAVHCALRSPPPEARALAMSRPPPPRVASVLGTMEMGRRMDAPASAAAVRAFLERGHTELDTAFMYSDGQSETILGGLGLGLGGGDCRVKIATKANPWDGKSLKPDSVRSQLETSLKRLQCPQVDLFYLHAPDHGTPVEETLHACQRLHQEGKFVELGLSNYASWEVAEICTLCKSNGWILPTVYQGMYNATTRQVETELFPCLRHFGLRFYAYNPLAGGLLTGKYKYEDKDGKQPVGRFFGNSWAETYRNRFWKEHHFEAIALVEKALQAAYGASAPSVTSAALRWMYHHSQLQGAHGDAVILGMSSLEQLEQNLAATEEGPLEPAVVDAFNQAWHLVAHECPNYFR.

The transit peptide at 1–38 (MLSAASRVVSRAAVHCALRSPPPEARALAMSRPPPPRV) directs the protein to the mitochondrion. Ser40 is modified (phosphoserine). Asp72 is a binding site for NADP(+). Tyr77 functions as the Proton donor in the catalytic mechanism. Lys128 carries the post-translational modification N6-acetyllysine. A substrate-binding site is contributed by His141. NADP(+) is bound by residues 171–172 (SN), Gln197, 226–236 (NPLAGGLLTGK), and Arg250. An N6-succinyllysine modification is found at Lys236. Ser255 carries the post-translational modification Phosphoserine. The substrate site is built by Tyr260 and Arg263. 318–326 (SSLEQLEQN) serves as a coordination point for NADP(+). Residue Arg359 participates in substrate binding.

This sequence belongs to the aldo/keto reductase family. Aldo/keto reductase 2 subfamily. In terms of assembly, homodimer. Detected in brain, liver, small intestine and testis, and at lower levels in heart, prostate, skeletal muscle and spleen. Detected in kidney proximal and distal tubules, endothelial cells lining the Bowman's capsules and some cysts. Detected at low levels in lung and pancreas (at protein level). Widely expressed.

It is found in the mitochondrion. Its subcellular location is the golgi apparatus. It localises to the cytoplasm. The enzyme catalyses 4-hydroxybutanoate + NADP(+) = succinate semialdehyde + NADPH + H(+). Its function is as follows. Catalyzes the NADPH-dependent reduction of succinic semialdehyde to gamma-hydroxybutyrate. May have an important role in producing the neuromodulator gamma-hydroxybutyrate (GHB). Has broad substrate specificity. Has NADPH-dependent aldehyde reductase activity towards 2-carboxybenzaldehyde, 2-nitrobenzaldehyde and pyridine-2-aldehyde (in vitro). Can reduce 1,2-naphthoquinone and 9,10-phenanthrenequinone (in vitro). Can reduce the dialdehyde protein-binding form of aflatoxin B1 (AFB1) to the non-binding AFB1 dialcohol. May be involved in protection of liver against the toxic and carcinogenic effects of AFB1, a potent hepatocarcinogen. The polypeptide is Aflatoxin B1 aldehyde reductase member 2 (AKR7A2) (Homo sapiens (Human)).